We begin with the raw amino-acid sequence, 126 residues long: uncharacterized protein (126 aa).

Residues 1-9 lie on the Extracellular side of the membrane; the sequence is MCTYIITQS. Residues 10 to 30 form a helical membrane-spanning segment; it reads FFFLPCLSFLFFKLVGFFDSV. Topologically, residues 31–73 are cytoplasmic; it reads FTAGKSLRIMFELPIFDKLTSCFAAIDCSATSLDIPFAEEELF. Residues 74–94 form a helical membrane-spanning segment; the sequence is LMLVSEPVLIPFLFVFEFMLI. The Extracellular segment spans residues 95-126; that stretch reads CKPCGSRSRFGFPVKNVSDFEETLEFDPTLLV.

The protein resides in the membrane. This is an uncharacterized protein from Saccharomyces cerevisiae (strain ATCC 204508 / S288c) (Baker's yeast).